Consider the following 488-residue polypeptide: Rhamnulokinase (488 aa).

Ala-13 to Arg-17 serves as a coordination point for ATP. An intrachain disulfide couples Cys-68 to Cys-222. Substrate contacts are provided by residues Gly-83 and His-236–Thr-238. Asp-237 functions as the Proton acceptor in the catalytic mechanism. Thr-259 serves as a coordination point for ATP. Asn-296 lines the substrate pocket. Gln-304 serves as a coordination point for ATP. Cys-353 and Cys-370 are oxidised to a cystine. Gly-402 is a binding site for ATP. A disulfide bond links Cys-413 and Cys-417.

Belongs to the rhamnulokinase family. Mg(2+) serves as cofactor.

It catalyses the reaction L-rhamnulose + ATP = L-rhamnulose 1-phosphate + ADP + H(+). Its pathway is carbohydrate degradation; L-rhamnose degradation; glycerone phosphate from L-rhamnose: step 2/3. Its function is as follows. Involved in the catabolism of L-rhamnose (6-deoxy-L-mannose). Catalyzes the transfer of the gamma-phosphate group from ATP to the 1-hydroxyl group of L-rhamnulose to yield L-rhamnulose 1-phosphate. The polypeptide is Rhamnulokinase (Klebsiella pneumoniae (strain 342)).